We begin with the raw amino-acid sequence, 110 residues long: T cell receptor alpha variable 35 (110 aa).

The N-terminal stretch at 1–19 (MLLEHLLIILWMQLTWVSG) is a signal peptide. In terms of domain architecture, Ig-like spans 20–110 (QQLNQSPQSM…DVGIYFCAGQ (91 aa)). Residues N40 and N93 are each glycosylated (N-linked (GlcNAc...) asparagine). C41 and C107 are disulfide-bonded.

In terms of assembly, alpha-beta TR is a heterodimer composed of an alpha and beta chain; disulfide-linked. The alpha-beta TR is associated with the transmembrane signaling CD3 coreceptor proteins to form the TR-CD3 (TcR or TCR). The assembly of alpha-beta TR heterodimers with CD3 occurs in the endoplasmic reticulum where a single alpha-beta TR heterodimer associates with one CD3D-CD3E heterodimer, one CD3G-CD3E heterodimer and one CD247 homodimer forming a stable octameric structure. CD3D-CD3E and CD3G-CD3E heterodimers preferentially associate with TR alpha and TR beta chains, respectively. The association of the CD247 homodimer is the last step of TcR assembly in the endoplasmic reticulum and is required for transport to the cell surface.

It localises to the cell membrane. V region of the variable domain of T cell receptor (TR) alpha chain that participates in the antigen recognition. Alpha-beta T cell receptors are antigen specific receptors which are essential to the immune response and are present on the cell surface of T lymphocytes. Recognize peptide-major histocompatibility (MH) (pMH) complexes that are displayed by antigen presenting cells (APC), a prerequisite for efficient T cell adaptive immunity against pathogens. Binding of alpha-beta TR to pMH complex initiates TR-CD3 clustering on the cell surface and intracellular activation of LCK that phosphorylates the ITAM motifs of CD3G, CD3D, CD3E and CD247 enabling the recruitment of ZAP70. In turn ZAP70 phosphorylates LAT, which recruits numerous signaling molecules to form the LAT signalosome. The LAT signalosome propagates signal branching to three major signaling pathways, the calcium, the mitogen-activated protein kinase (MAPK) kinase and the nuclear factor NF-kappa-B (NF-kB) pathways, leading to the mobilization of transcription factors that are critical for gene expression and essential for T cell growth and differentiation. The T cell repertoire is generated in the thymus, by V-(D)-J rearrangement. This repertoire is then shaped by intrathymic selection events to generate a peripheral T cell pool of self-MH restricted, non-autoaggressive T cells. Post-thymic interaction of alpha-beta TR with the pMH complexes shapes TR structural and functional avidity. In Homo sapiens (Human), this protein is T cell receptor alpha variable 35.